Here is a 260-residue protein sequence, read N- to C-terminus: Putative [LysW]-aminoadipate/[LysW]-glutamate kinase (260 aa).

Residues Gly-35–Gly-36, Arg-62, and Asn-162 each bind substrate.

It belongs to the acetylglutamate kinase family. LysZ subfamily.

It is found in the cytoplasm. The catalysed reaction is [amino-group carrier protein]-C-terminal-N-(1,4-dicarboxybutan-1-yl)-L-glutamine + ATP = [amino-group carrier protein]-C-terminal-N-(1-carboxy-5-phosphooxy-5-oxopentan-1-yl)-L-glutamine + ADP. It catalyses the reaction [amino-group carrier protein]-C-terminal-gamma-(L-glutamyl)-L-glutamate + ATP = [amino-group carrier protein]-C-terminal-gamma-(5-phospho-L-glutamyl)-L-glutamate + ADP. The protein operates within amino-acid biosynthesis; L-lysine biosynthesis via AAA pathway; L-lysine from L-alpha-aminoadipate (Thermus route): step 2/5. It participates in amino-acid biosynthesis; L-arginine biosynthesis. In terms of biological role, involved in both the arginine and lysine biosynthetic pathways. Phosphorylates the LysW-bound precursors glutamate (for arginine biosynthesis), respectively alpha-aminoadipate (for lysine biosynthesis). This is Putative [LysW]-aminoadipate/[LysW]-glutamate kinase from Pyrobaculum neutrophilum (strain DSM 2338 / JCM 9278 / NBRC 100436 / V24Sta) (Thermoproteus neutrophilus).